We begin with the raw amino-acid sequence, 168 residues long: MIEIRTGIGTDVHQLSAGVPMHVAGLSFPDETVGLVGHSDGDVACHAICDALLSATGLGDIGSIFGTADPQWAGAAGVALLGHVVALVTGEGWTIQNVAVQVVGQRPRMAARRAEAEAALAQTVGAPVSVSATTTDHLGFTGRGEGVAAIASALVTRGLKGEDSSLIR.

2 residues coordinate a divalent metal cation: D11 and H13. Residues 11 to 13 and 38 to 39 contribute to the 4-CDP-2-C-methyl-D-erythritol 2-phosphate site; these read DVH and HS. H46 lines the a divalent metal cation pocket. 4-CDP-2-C-methyl-D-erythritol 2-phosphate contacts are provided by residues 60 to 62, 133 to 136, F140, and R143; these read DIG and TTTD.

Belongs to the IspF family. As to quaternary structure, homotrimer. Requires a divalent metal cation as cofactor.

The enzyme catalyses 4-CDP-2-C-methyl-D-erythritol 2-phosphate = 2-C-methyl-D-erythritol 2,4-cyclic diphosphate + CMP. It functions in the pathway isoprenoid biosynthesis; isopentenyl diphosphate biosynthesis via DXP pathway; isopentenyl diphosphate from 1-deoxy-D-xylulose 5-phosphate: step 4/6. Functionally, involved in the biosynthesis of isopentenyl diphosphate (IPP) and dimethylallyl diphosphate (DMAPP), two major building blocks of isoprenoid compounds. Catalyzes the conversion of 4-diphosphocytidyl-2-C-methyl-D-erythritol 2-phosphate (CDP-ME2P) to 2-C-methyl-D-erythritol 2,4-cyclodiphosphate (ME-CPP) with a corresponding release of cytidine 5-monophosphate (CMP). This is 2-C-methyl-D-erythritol 2,4-cyclodiphosphate synthase from Cutibacterium acnes (strain DSM 16379 / KPA171202) (Propionibacterium acnes).